Reading from the N-terminus, the 107-residue chain is 4-carboxymethyl-4-methylbutenolide mutase (107 aa).

Catalysis depends on H26, which acts as the Proton donor/acceptor. 3-methylmuconolactone-binding residues include H26 and Y39. The 4-methylmuconolactone site is built by H26 and Y39.

The protein belongs to the MmlI family. In terms of assembly, homodimer.

The enzyme catalyses 4-methylmuconolactone = 3-methylmuconolactone. With respect to regulation, inhibited by p-chloromercuribenzoate. In terms of biological role, isomerase involved in the degradation of 4-methylsalicylate and 5-methylsalicylate. Catalyzes the isomerization of the dead-end metabolite 4-methylmuconolactone (4-ML) to 3-methylmuconolactone (3-ML), which can then be further degraded through a modified 3-oxoadipate pathway. Can also use 1-methylbislactone but not 3-methyl-cis,cis-muconate. In Pseudomonas reinekei, this protein is 4-carboxymethyl-4-methylbutenolide mutase.